The chain runs to 658 residues: Structure-specific endonuclease subunit SLX1 (658 aa).

The region spanning 12–92 is the GIY-YIG domain; that stretch reads PFYACYFLRS…AKPHLSRHLK (81 aa). 4 disordered regions span residues 29-52, 239-269, 288-328, and 594-658; these read YIGSTPAPPRRKRQHNGHLTQGAY, GVAEHPVKKRQTSSRQKPHTEETSAWPETLP, PIPQ…NGVD, and TTSR…IDLT. 2 stretches are compositionally biased toward basic and acidic residues: residues 308–324 and 627–640; these read KLSDKARPSALEDHDAE and SKIDGDGAGKDTKK. The span at 641–652 shows a compositional bias: polar residues; that stretch reads NTTQKAKSNETS.

This sequence belongs to the SLX1 family. In terms of assembly, forms a heterodimer with SLX4. A divalent metal cation is required as a cofactor.

It localises to the nucleus. In terms of biological role, catalytic subunit of the SLX1-SLX4 structure-specific endonuclease that resolves DNA secondary structures generated during DNA repair and recombination. Has endonuclease activity towards branched DNA substrates, introducing single-strand cuts in duplex DNA close to junctions with ss-DNA. In Mycosarcoma maydis (Corn smut fungus), this protein is Structure-specific endonuclease subunit SLX1.